We begin with the raw amino-acid sequence, 534 residues long: CTP synthase (534 aa).

An amidoligase domain region spans residues 1-267 (MTKYIFVTGG…DQIVCDHLKL (267 aa)). Ser13 is a CTP binding site. Position 13 (Ser13) interacts with UTP. 14–19 (SIGKGI) lines the ATP pocket. An L-glutamine-binding site is contributed by Tyr54. Asp71 lines the ATP pocket. Mg(2+) contacts are provided by Asp71 and Glu141. CTP-binding positions include 148-150 (DIE), 188-193 (KTKPTQ), and Lys224. UTP-binding positions include 188-193 (KTKPTQ) and Lys224. The Glutamine amidotransferase type-1 domain occupies 292–534 (KIALVGKYVE…FVTAAVENMK (243 aa)). Residue Gly354 participates in L-glutamine binding. Cys381 (nucleophile; for glutamine hydrolysis) is an active-site residue. Residues 382-385 (LGMQ), Glu405, and Arg463 each bind L-glutamine. Catalysis depends on residues His508 and Glu510.

Belongs to the CTP synthase family. As to quaternary structure, homotetramer.

The enzyme catalyses UTP + L-glutamine + ATP + H2O = CTP + L-glutamate + ADP + phosphate + 2 H(+). It carries out the reaction L-glutamine + H2O = L-glutamate + NH4(+). The catalysed reaction is UTP + NH4(+) + ATP = CTP + ADP + phosphate + 2 H(+). It participates in pyrimidine metabolism; CTP biosynthesis via de novo pathway; CTP from UDP: step 2/2. Its activity is regulated as follows. Allosterically activated by GTP, when glutamine is the substrate; GTP has no effect on the reaction when ammonia is the substrate. The allosteric effector GTP functions by stabilizing the protein conformation that binds the tetrahedral intermediate(s) formed during glutamine hydrolysis. Inhibited by the product CTP, via allosteric rather than competitive inhibition. Functionally, catalyzes the ATP-dependent amination of UTP to CTP with either L-glutamine or ammonia as the source of nitrogen. Regulates intracellular CTP levels through interactions with the four ribonucleotide triphosphates. This Streptococcus agalactiae serotype V (strain ATCC BAA-611 / 2603 V/R) protein is CTP synthase.